The chain runs to 204 residues: dCTP deaminase, dUMP-forming (204 aa).

DCTP-binding positions include 117–122 (RSSLGR), His-128, Gly-132, Asp-135, 143–145 (TLE), Gln-163, Tyr-177, Lys-184, and Gln-188. Glu-145 (proton donor/acceptor) is an active-site residue.

As to quaternary structure, homotrimer. Two trimers assemble into a hexamer by stacking on top of each other. Mg(2+) is required as a cofactor.

The enzyme catalyses dCTP + 2 H2O = dUMP + NH4(+) + diphosphate. The protein operates within pyrimidine metabolism; dUMP biosynthesis; dUMP from dCTP: step 1/1. Inhibited by dTTP. Bifunctional enzyme that catalyzes both the deamination of dCTP to dUTP and the hydrolysis of dUTP to dUMP without releasing the toxic dUTP intermediate. It also acts as a dUTP diphosphatase with a lower affinity for dUTP than for dCTP. In Methanocaldococcus jannaschii (strain ATCC 43067 / DSM 2661 / JAL-1 / JCM 10045 / NBRC 100440) (Methanococcus jannaschii), this protein is dCTP deaminase, dUMP-forming.